Reading from the N-terminus, the 302-residue chain is 33 kDa chaperonin (302 aa).

Cystine bridges form between Cys-234-Cys-236 and Cys-267-Cys-270.

Belongs to the HSP33 family. Post-translationally, under oxidizing conditions two disulfide bonds are formed involving the reactive cysteines. Under reducing conditions zinc is bound to the reactive cysteines and the protein is inactive.

The protein resides in the cytoplasm. Its function is as follows. Redox regulated molecular chaperone. Protects both thermally unfolding and oxidatively damaged proteins from irreversible aggregation. Plays an important role in the bacterial defense system toward oxidative stress. In Neisseria meningitidis serogroup B (strain ATCC BAA-335 / MC58), this protein is 33 kDa chaperonin.